Reading from the N-terminus, the 130-residue chain is MATLRSFVLVDNGGTGNVTVVPVSNANGVAEWLSNNSRSQAYRVTASYRASGADKRKYAIKLEVPKIVTQVVNGVELPGSAWKAYASIDLTIPIFAATDDVTVISKSLAGLFKVGNPIAEAISSQSGFYA.

The interval 31-104 (EWLSNNSRSQ…FAATDDVTVI (74 aa)) is viral RNA-binding.

The protein belongs to the Leviviricetes capsid protein family. Homodimer. The capsid proteins form dimers that assemble by group of 5. Twelve such pentamers are linked together with free dimers. The homodimers binds to the viral RNA via an operator hairpin, but also to many other RNA sequences in the viral genome; this interaction probably shifts the virus from the replicative to the assembly phase and ensures specific encapsidation of the viral genome.

Its subcellular location is the virion. Its function is as follows. Capsid protein self-assembles to form an icosahedral capsid with a T=3 symmetry, about 26 nm in diameter, and consisting of 89 capsid proteins dimers (178 capsid proteins). Involved in viral genome encapsidation through the interaction between a capsid protein dimer and the multiple packaging signals present in the RNA genome. The capsid also contains 1 copy of the A2 maturation protein. In terms of biological role, acts as a translational repressor of viral replicase synthesis late in infection. This latter function is the result of capsid protein interaction with an RNA hairpin which contains the replicase ribosome-binding site. This Escherichia coli (Bacteriophage GA) protein is Capsid protein.